We begin with the raw amino-acid sequence, 478 residues long: Cysteine--tRNA ligase (478 aa).

Cys29 is a binding site for Zn(2+). A 'HIGH' region motif is present at residues 31 to 41; sequence VTVYDYCHLGH. Zn(2+)-binding residues include Cys213, His238, and Glu242. The 'KMSKS' region motif lies at 270–274; it reads KMSKS. Residue Lys273 coordinates ATP.

It belongs to the class-I aminoacyl-tRNA synthetase family. Monomer. Requires Zn(2+) as cofactor.

The protein localises to the cytoplasm. It carries out the reaction tRNA(Cys) + L-cysteine + ATP = L-cysteinyl-tRNA(Cys) + AMP + diphosphate. This Synechococcus sp. (strain ATCC 27144 / PCC 6301 / SAUG 1402/1) (Anacystis nidulans) protein is Cysteine--tRNA ligase.